Here is a 670-residue protein sequence, read N- to C-terminus: Probable potassium transport system protein Kup 1 (670 aa).

13 consecutive transmembrane segments (helical) span residues 14–34, 58–78, 101–121, 147–167, 175–195, 196–216, 220–240, 252–272, 294–314, 345–365, 374–394, 403–423, and 427–447; these read GAGF…SPLY, LSLI…WIAL, WLII…ALTP, LPIV…QRFG, FGPV…INLF, GDFS…LLSP, AGIF…ALYS, VSWP…GAWL, LIIF…QALI, LYIP…VVYF, AYGL…TVYL, VLVG…FAAS, and FMHG…VMAI.

This sequence belongs to the HAK/KUP transporter (TC 2.A.72) family.

Its subcellular location is the cell membrane. The catalysed reaction is K(+)(in) + H(+)(in) = K(+)(out) + H(+)(out). Functionally, transport of potassium into the cell. Likely operates as a K(+):H(+) symporter. The polypeptide is Probable potassium transport system protein Kup 1 (Lactococcus lactis subsp. lactis (strain IL1403) (Streptococcus lactis)).